The sequence spans 120 residues: Large ribosomal subunit protein uL18 (120 aa).

It belongs to the universal ribosomal protein uL18 family. As to quaternary structure, part of the 50S ribosomal subunit; part of the 5S rRNA/L5/L18/L25 subcomplex. Contacts the 5S and 23S rRNAs.

This is one of the proteins that bind and probably mediate the attachment of the 5S RNA into the large ribosomal subunit, where it forms part of the central protuberance. The chain is Large ribosomal subunit protein uL18 from Bacillus cytotoxicus (strain DSM 22905 / CIP 110041 / 391-98 / NVH 391-98).